A 98-amino-acid polypeptide reads, in one-letter code: MPPIYMNIILAFTLSLMGMLVYRSHLMSSLLCLEGMMLSLFILGTTMALNMHFTLMTMLPIVLLVFAACEAAVGLSLLVMVSNTYGLDYVQNLNLLQC.

The next 3 membrane-spanning stretches (helical) occupy residues 1–21, 29–49, and 61–81; these read MPPIYMNIILAFTLSLMGMLV, SLLCLEGMMLSLFILGTTMAL, and IVLLVFAACEAAVGLSLLVMV.

Belongs to the complex I subunit 4L family. In terms of assembly, core subunit of respiratory chain NADH dehydrogenase (Complex I) which is composed of 45 different subunits.

The protein localises to the mitochondrion inner membrane. The catalysed reaction is a ubiquinone + NADH + 5 H(+)(in) = a ubiquinol + NAD(+) + 4 H(+)(out). In terms of biological role, core subunit of the mitochondrial membrane respiratory chain NADH dehydrogenase (Complex I) which catalyzes electron transfer from NADH through the respiratory chain, using ubiquinone as an electron acceptor. Part of the enzyme membrane arm which is embedded in the lipid bilayer and involved in proton translocation. This chain is NADH-ubiquinone oxidoreductase chain 4L (MT-ND4L), found in Orycteropus afer (Aardvark).